Here is an 850-residue protein sequence, read N- to C-terminus: DNA mismatch repair protein MutS (850 aa).

608–615 (GPNMGGKS) provides a ligand contact to ATP.

Belongs to the DNA mismatch repair MutS family.

This protein is involved in the repair of mismatches in DNA. It is possible that it carries out the mismatch recognition step. This protein has a weak ATPase activity. The chain is DNA mismatch repair protein MutS from Thiobacillus denitrificans (strain ATCC 25259 / T1).